Here is an 85-residue protein sequence, read N- to C-terminus: Progonadoliberin-2 (85 aa).

The N-terminal stretch at 1–23 (MCVSRLVLLFGLLLCVGAQLSNA) is a signal peptide. Gln-24 carries the post-translational modification Pyrrolidone carboxylic acid. Gly-33 carries the post-translational modification Glycine amide.

The protein belongs to the GnRH family.

It localises to the secreted. Its function is as follows. Stimulates the secretion of gonadotropins. The chain is Progonadoliberin-2 (gnrh2) from Dicentrarchus labrax (European seabass).